Consider the following 628-residue polypeptide: 1-deoxy-D-xylulose-5-phosphate synthase (628 aa).

Residues histidine 72 and 113 to 115 (GHS) contribute to the thiamine diphosphate site. Aspartate 144 serves as a coordination point for Mg(2+). Thiamine diphosphate contacts are provided by residues 145 to 146 (GA), asparagine 173, tyrosine 284, and glutamate 366. Residue asparagine 173 coordinates Mg(2+).

It belongs to the transketolase family. DXPS subfamily. Homodimer. Mg(2+) is required as a cofactor. Requires thiamine diphosphate as cofactor.

The enzyme catalyses D-glyceraldehyde 3-phosphate + pyruvate + H(+) = 1-deoxy-D-xylulose 5-phosphate + CO2. Its pathway is metabolic intermediate biosynthesis; 1-deoxy-D-xylulose 5-phosphate biosynthesis; 1-deoxy-D-xylulose 5-phosphate from D-glyceraldehyde 3-phosphate and pyruvate: step 1/1. In terms of biological role, catalyzes the acyloin condensation reaction between C atoms 2 and 3 of pyruvate and glyceraldehyde 3-phosphate to yield 1-deoxy-D-xylulose-5-phosphate (DXP). The polypeptide is 1-deoxy-D-xylulose-5-phosphate synthase (Shouchella clausii (strain KSM-K16) (Alkalihalobacillus clausii)).